Reading from the N-terminus, the 191-residue chain is Leucyl/phenylalanyl-tRNA--protein transferase (191 aa).

It belongs to the L/F-transferase family.

Its subcellular location is the cytoplasm. The enzyme catalyses N-terminal L-lysyl-[protein] + L-leucyl-tRNA(Leu) = N-terminal L-leucyl-L-lysyl-[protein] + tRNA(Leu) + H(+). The catalysed reaction is N-terminal L-arginyl-[protein] + L-leucyl-tRNA(Leu) = N-terminal L-leucyl-L-arginyl-[protein] + tRNA(Leu) + H(+). It catalyses the reaction L-phenylalanyl-tRNA(Phe) + an N-terminal L-alpha-aminoacyl-[protein] = an N-terminal L-phenylalanyl-L-alpha-aminoacyl-[protein] + tRNA(Phe). Its function is as follows. Functions in the N-end rule pathway of protein degradation where it conjugates Leu, Phe and, less efficiently, Met from aminoacyl-tRNAs to the N-termini of proteins containing an N-terminal arginine or lysine. The sequence is that of Leucyl/phenylalanyl-tRNA--protein transferase from Trichormus variabilis (strain ATCC 29413 / PCC 7937) (Anabaena variabilis).